The sequence spans 194 residues: Large ribosomal subunit protein bL9 (194 aa).

A compositionally biased stretch (basic and acidic residues) spans 156–167 (RGEDISSRREDQ). Residues 156-194 (RGEDISSRREDQDAAAEAIAAAGEFFDPDAQQDEEPEQQ) form a disordered region. Residues 181-194 (FDPDAQQDEEPEQQ) show a composition bias toward acidic residues.

Belongs to the bacterial ribosomal protein bL9 family.

Binds to the 23S rRNA. The protein is Large ribosomal subunit protein bL9 of Rhodopseudomonas palustris (strain BisB5).